Consider the following 498-residue polypeptide: ATP synthase subunit beta, chloroplastic (498 aa).

172 to 179 (GGAGVGKT) lines the ATP pocket.

This sequence belongs to the ATPase alpha/beta chains family. F-type ATPases have 2 components, CF(1) - the catalytic core - and CF(0) - the membrane proton channel. CF(1) has five subunits: alpha(3), beta(3), gamma(1), delta(1), epsilon(1). CF(0) has four main subunits: a(1), b(1), b'(1) and c(9-12).

It is found in the plastid. Its subcellular location is the chloroplast thylakoid membrane. It carries out the reaction ATP + H2O + 4 H(+)(in) = ADP + phosphate + 5 H(+)(out). Its function is as follows. Produces ATP from ADP in the presence of a proton gradient across the membrane. The catalytic sites are hosted primarily by the beta subunits. The chain is ATP synthase subunit beta, chloroplastic from Eucalyptus globulus subsp. globulus (Tasmanian blue gum).